Here is a 78-residue protein sequence, read N- to C-terminus: Large ribosomal subunit protein bL28 (78 aa).

This sequence belongs to the bacterial ribosomal protein bL28 family.

The polypeptide is Large ribosomal subunit protein bL28 (Methylobacillus flagellatus (strain ATCC 51484 / DSM 6875 / VKM B-1610 / KT)).